A 123-amino-acid chain; its full sequence is Small ribosomal subunit protein uS12 (123 aa).

A 3-methylthioaspartic acid modification is found at D89.

Belongs to the universal ribosomal protein uS12 family. As to quaternary structure, part of the 30S ribosomal subunit. Contacts proteins S8 and S17. May interact with IF1 in the 30S initiation complex.

Functionally, with S4 and S5 plays an important role in translational accuracy. In terms of biological role, interacts with and stabilizes bases of the 16S rRNA that are involved in tRNA selection in the A site and with the mRNA backbone. Located at the interface of the 30S and 50S subunits, it traverses the body of the 30S subunit contacting proteins on the other side and probably holding the rRNA structure together. The combined cluster of proteins S8, S12 and S17 appears to hold together the shoulder and platform of the 30S subunit. The polypeptide is Small ribosomal subunit protein uS12 (Citrifermentans bemidjiense (strain ATCC BAA-1014 / DSM 16622 / JCM 12645 / Bem) (Geobacter bemidjiensis)).